Reading from the N-terminus, the 126-residue chain is NADPH-dependent 7-cyano-7-deazaguanine reductase (126 aa).

Residue Cys-40 is the Thioimide intermediate of the active site. Asp-47 functions as the Proton donor in the catalytic mechanism. Substrate-binding positions include 62-64 and 81-82; these read IEL and HE.

The protein belongs to the GTP cyclohydrolase I family. QueF type 1 subfamily.

Its subcellular location is the cytoplasm. The catalysed reaction is 7-aminomethyl-7-carbaguanine + 2 NADP(+) = 7-cyano-7-deazaguanine + 2 NADPH + 3 H(+). It participates in tRNA modification; tRNA-queuosine biosynthesis. Its function is as follows. Catalyzes the NADPH-dependent reduction of 7-cyano-7-deazaguanine (preQ0) to 7-aminomethyl-7-deazaguanine (preQ1). In Campylobacter jejuni subsp. doylei (strain ATCC BAA-1458 / RM4099 / 269.97), this protein is NADPH-dependent 7-cyano-7-deazaguanine reductase.